The sequence spans 102 residues: NADH-quinone oxidoreductase subunit K (102 aa).

Helical transmembrane passes span 3–23 (IGLT…AFGI), 31–51 (IVLL…LVAF), and 66–86 (FILT…VVYF).

It belongs to the complex I subunit 4L family. As to quaternary structure, NDH-1 is composed of 14 different subunits. Subunits NuoA, H, J, K, L, M, N constitute the membrane sector of the complex.

The protein localises to the cell inner membrane. It catalyses the reaction a quinone + NADH + 5 H(+)(in) = a quinol + NAD(+) + 4 H(+)(out). Its function is as follows. NDH-1 shuttles electrons from NADH, via FMN and iron-sulfur (Fe-S) centers, to quinones in the respiratory chain. The immediate electron acceptor for the enzyme in this species is believed to be ubiquinone. Couples the redox reaction to proton translocation (for every two electrons transferred, four hydrogen ions are translocated across the cytoplasmic membrane), and thus conserves the redox energy in a proton gradient. In Rhodospirillum centenum (strain ATCC 51521 / SW), this protein is NADH-quinone oxidoreductase subunit K.